The sequence spans 316 residues: Olfactory receptor 2H1 (316 aa).

The Extracellular segment spans residues Met1–Arg23. Asn3 carries an N-linked (GlcNAc...) asparagine glycan. The helical transmembrane segment at Thr24–Ser47 threads the bilayer. Residues Val48 to Ser55 are Cytoplasmic-facing. Residues Pro56–Pro77 form a helical membrane-spanning segment. Over Gln78–Gln98 the chain is Extracellular. Cys95 and Cys187 form a disulfide bridge. A helical membrane pass occupies residues Leu99–Phe118. Topologically, residues Asp119–Arg137 are cytoplasmic. Residues Leu138–Val156 form a helical membrane-spanning segment. Residues Gln157–Asn193 lie on the Extracellular side of the membrane. The helical transmembrane segment at Glu194–Gly217 threads the bilayer. Over Ala218–Lys234 the chain is Cytoplasmic. The chain crosses the membrane as a helical span at residues Ala235 to Tyr257. At Leu258–Lys270 the chain is on the extracellular side. Residues Phe271 to Leu290 traverse the membrane as a helical segment. The Cytoplasmic segment spans residues Arg291–Ala316.

Belongs to the G-protein coupled receptor 1 family.

The protein resides in the cell membrane. Functionally, odorant receptor. This chain is Olfactory receptor 2H1 (OR2H1), found in Homo sapiens (Human).